The sequence spans 304 residues: Type II methyltransferase M.ScaI (304 aa).

This sequence belongs to the N(4)/N(6)-methyltransferase family. N(4) subfamily.

It carries out the reaction a 2'-deoxycytidine in DNA + S-adenosyl-L-methionine = an N(4)-methyl-2'-deoxycytidine in DNA + S-adenosyl-L-homocysteine + H(+). Functionally, a methylase that recognizes the double-stranded sequence 5'-AGTACT-3', methylates C-5 on both strands, and protects the DNA from cleavage by the ScaI endonuclease. The protein is Type II methyltransferase M.ScaI of Streptomyces caespitosus.